Here is a 178-residue protein sequence, read N- to C-terminus: Peptide deformylase (178 aa).

Fe cation-binding residues include C96 and H138. E139 is a catalytic residue. Position 142 (H142) interacts with Fe cation.

The protein belongs to the polypeptide deformylase family. Requires Fe(2+) as cofactor.

It catalyses the reaction N-terminal N-formyl-L-methionyl-[peptide] + H2O = N-terminal L-methionyl-[peptide] + formate. Functionally, removes the formyl group from the N-terminal Met of newly synthesized proteins. Requires at least a dipeptide for an efficient rate of reaction. N-terminal L-methionine is a prerequisite for activity but the enzyme has broad specificity at other positions. In Bartonella tribocorum (strain CIP 105476 / IBS 506), this protein is Peptide deformylase.